A 66-amino-acid chain; its full sequence is Moricin-1 (66 aa).

A signal peptide spans 1–24 (MNILKFFFVFIVAMSLVSCSTAAP).

As to expression, expressed in fat body and to a lesser extent in hemocyte and Malpighian tubules.

It localises to the secreted. In terms of biological role, has antibacterial activity against Gram-positive and Gram-negative bacteria. Probably acts by disturbing membrane functions with its amphipathic structure. The sequence is that of Moricin-1 (MOR1) from Bombyx mori (Silk moth).